Consider the following 570-residue polypeptide: CRISPR-associated protein Cas8a1/Csx13 (570 aa).

Disordered regions lie at residues 1–23 (MACMAPRGPAAIPHPSSERAGLR) and 551–570 (GGEAAELEDADEAAGASEQS).

Belongs to the CRISPR-associated protein Cas8a1/Csx13 family. Myxan subtype subfamily.

In terms of biological role, CRISPR (clustered regularly interspaced short palindromic repeat) is an adaptive immune system that provides protection against mobile genetic elements (viruses, transposable elements and conjugative plasmids). CRISPR clusters contain spacers, sequences complementary to antecedent mobile elements, and target invading nucleic acids. CRISPR clusters are transcribed and processed into CRISPR RNA (crRNA). Functions in an unknown fashion to stimulate transcription of fruA independently of the intracellular A- and E-developmental signals. The chain is CRISPR-associated protein Cas8a1/Csx13 (devT) from Myxococcus xanthus (strain DK1622).